We begin with the raw amino-acid sequence, 239 residues long: Fatty acid metabolism regulator protein (239 aa).

Positions 6–74 (QSPAGFAEEY…HGKPTKVNNF (69 aa)) constitute an HTH gntR-type domain. Residues 34–53 (ERELSELIGVTRTTLREVLQ) constitute a DNA-binding region (H-T-H motif).

In terms of assembly, homodimer.

It localises to the cytoplasm. Its function is as follows. Multifunctional regulator of fatty acid metabolism. This is Fatty acid metabolism regulator protein from Klebsiella pneumoniae subsp. pneumoniae (strain ATCC 700721 / MGH 78578).